The chain runs to 491 residues: Cytochrome P450 2F3 (491 aa).

Cysteine 436 is a heme binding site.

This sequence belongs to the cytochrome P450 family. It depends on heme as a cofactor. In terms of tissue distribution, lung specific.

The protein resides in the endoplasmic reticulum membrane. The protein localises to the microsome membrane. It carries out the reaction an organic molecule + reduced [NADPH--hemoprotein reductase] + O2 = an alcohol + oxidized [NADPH--hemoprotein reductase] + H2O + H(+). Functionally, bioactivates 3-methylindole (3MI) by dehydrogenation to the putative electrophile 3-methylene-indolenine. Stereoselectively catalyzes the formation of the 1R,2S-oxide from naphthalene. Lack activity with other common P450 substrates including 7-ethoxycoumarin. This chain is Cytochrome P450 2F3 (CYP2F3), found in Capra hircus (Goat).